Consider the following 449-residue polypeptide: Phosphoglucosamine mutase (449 aa).

Ser102 (phosphoserine intermediate) is an active-site residue. 4 residues coordinate Mg(2+): Ser102, Asp241, Asp243, and Asp245. Ser102 carries the post-translational modification Phosphoserine.

It belongs to the phosphohexose mutase family. It depends on Mg(2+) as a cofactor. Post-translationally, activated by phosphorylation.

It carries out the reaction alpha-D-glucosamine 1-phosphate = D-glucosamine 6-phosphate. Functionally, catalyzes the conversion of glucosamine-6-phosphate to glucosamine-1-phosphate. The sequence is that of Phosphoglucosamine mutase from Pseudoalteromonas translucida (strain TAC 125).